A 188-amino-acid chain; its full sequence is Probable DNA-directed RNA polymerase subunit delta (188 aa).

The region spanning 14–83 is the HTH HARE-type domain; it reads LSMIEVARAI…GENKWGLRSW (70 aa). Residues 119–188 form a disordered region; sequence EDAIDYSADD…EDEEDEEEEE (70 aa).

The protein belongs to the RpoE family. RNAP is composed of a core of 2 alpha, a beta and a beta' subunits. The core is associated with a delta subunit and one of several sigma factors.

Its function is as follows. Participates in both the initiation and recycling phases of transcription. In the presence of the delta subunit, RNAP displays an increased specificity of transcription, a decreased affinity for nucleic acids, and an increased efficiency of RNA synthesis because of enhanced recycling. The protein is Probable DNA-directed RNA polymerase subunit delta of Streptococcus equi subsp. equi (strain 4047).